The sequence spans 364 residues: Caffeic acid 3-O-methyltransferase 3 (364 aa).

A substrate-binding site is contributed by 129-135 (MNQDKVL). Positions 161–179 (AFEYHGTDPRFNKVFNKGM) are substrate binding. Residues Gly-207, Asp-230, Asp-250, Met-251, and Lys-264 each coordinate S-adenosyl-L-methionine. His-268 functions as the Proton acceptor in the catalytic mechanism.

It belongs to the class I-like SAM-binding methyltransferase superfamily. Cation-independent O-methyltransferase family. COMT subfamily. In terms of assembly, homodimer.

It catalyses the reaction (E)-caffeate + S-adenosyl-L-methionine = (E)-ferulate + S-adenosyl-L-homocysteine + H(+). It participates in aromatic compound metabolism; phenylpropanoid biosynthesis. Its function is as follows. Catalyzes the conversion of caffeic acid to ferulic acid and of 5-hydroxyferulic acid to sinapic acid. The resulting products may subsequently be converted to the corresponding alcohols that are incorporated into lignins. The polypeptide is Caffeic acid 3-O-methyltransferase 3 (HOMT3) (Populus kitakamiensis (Aspen)).